A 339-amino-acid chain; its full sequence is MAGRVKIKQKELIDSTVKNKNVMNLFHEIIGSKGNINFSIVWPKFKKIKQSVYEYISILSVLEKASVMQNFEEDKKMLELFVQKLWAAYEGYFKYPEIEKYEVDGQVNFNLVPQYVLEKFSQLYRSRINSELVTLILNSCAFLSKYNDYILKKDPYILTITPGLCFSPIPNFEDLNFKYLYNSDKNSQHDKDFIMFILYKLYTAALGVYNAISIPDIDVEDLENIILSSVSQIKKQIPRCKDAFNKIESSVHLLRKNFNTYYSDYVGSGYNPTIIMEQYIKDISQDSKNISPRISYQFRTIIKYYRDMIATKHQTMDPQVLNLVKHVEKKLDMLDREKK.

Belongs to the asfivirus H339R family. In terms of assembly, interacts with host NACA (alpha chain of nascent polypeptide-associated complex).

The protein resides in the host cytoplasm. Its subcellular location is the host nucleus. This chain is Protein H339R, found in African swine fever virus (isolate Tick/Malawi/Lil 20-1/1983) (ASFV).